The chain runs to 157 residues: uncharacterized protein (157 aa).

The region spanning 9–147 (LLINYKTLDE…DFYVWHPEVN (139 aa)) is the N-acetyltransferase domain.

This is an uncharacterized protein from Bacillus cereus (strain 03BB102).